Reading from the N-terminus, the 343-residue chain is Anthranilate phosphoribosyltransferase (343 aa).

Residues Gly-86, 89–90, Thr-94, 96–99, 114–122, and Ser-126 contribute to the 5-phospho-alpha-D-ribose 1-diphosphate site; these read GD, NIST, and KHGNRSASG. Residue Gly-86 coordinates anthranilate. Ser-98 is a Mg(2+) binding site. Residue Asn-117 participates in anthranilate binding. Arg-172 is an anthranilate binding site. Residues Asp-231 and Glu-232 each coordinate Mg(2+).

It belongs to the anthranilate phosphoribosyltransferase family. As to quaternary structure, homodimer. Requires Mg(2+) as cofactor.

The catalysed reaction is N-(5-phospho-beta-D-ribosyl)anthranilate + diphosphate = 5-phospho-alpha-D-ribose 1-diphosphate + anthranilate. It participates in amino-acid biosynthesis; L-tryptophan biosynthesis; L-tryptophan from chorismate: step 2/5. Functionally, catalyzes the transfer of the phosphoribosyl group of 5-phosphorylribose-1-pyrophosphate (PRPP) to anthranilate to yield N-(5'-phosphoribosyl)-anthranilate (PRA). The sequence is that of Anthranilate phosphoribosyltransferase from Synechococcus sp. (strain JA-2-3B'a(2-13)) (Cyanobacteria bacterium Yellowstone B-Prime).